Reading from the N-terminus, the 149-residue chain is Urease accessory protein UreE (149 aa).

This sequence belongs to the UreE family.

The protein localises to the cytoplasm. Involved in urease metallocenter assembly. Binds nickel. Probably functions as a nickel donor during metallocenter assembly. This is Urease accessory protein UreE from Corynebacterium efficiens (strain DSM 44549 / YS-314 / AJ 12310 / JCM 11189 / NBRC 100395).